Consider the following 253-residue polypeptide: MGEFNEKKATCGTVCLKYLLFTYNCCFWLAGLAVMAVGIWTLALKSDYISLLASSTYLATAYILVVAGVVVMVTGVLGCCATFKERRNLLRLYFILLLIIFLLEIIAGILAYVYYQQLNTELKENLKDTMVKRYHQSGHEGVSSAVDKLQQEFHCCGSNNSQDWQDSEWIRSGEADSRVVPDSCCKTMVAGCGKRDHASNIYKVEGGCITKLETFIQEHLRVIGAVGIGIACVQVFGMIFTCCLYRSLKLEHY.

Over 1–18 (MGEFNEKKATCGTVCLKY) the chain is Cytoplasmic. Residues Cys11 and Cys15 are each lipidated (S-palmitoyl cysteine). Residues 19–39 (LLFTYNCCFWLAGLAVMAVGI) traverse the membrane as a helical segment. Topologically, residues 40–57 (WTLALKSDYISLLASSTY) are extracellular. Residues 58–78 (LATAYILVVAGVVVMVTGVLG) traverse the membrane as a helical segment. Residues 79–91 (CCATFKERRNLLR) are Cytoplasmic-facing. The chain crosses the membrane as a helical span at residues 92-112 (LYFILLLIIFLLEIIAGILAY). Residues 113–221 (VYYQQLNTEL…LETFIQEHLR (109 aa)) are Extracellular-facing. Residue Asn159 is glycosylated (N-linked (GlcNAc...) asparagine). The helical transmembrane segment at 222–242 (VIGAVGIGIACVQVFGMIFTC) threads the bilayer. Residues Cys242 and Cys243 are each lipidated (S-palmitoyl cysteine). Residues 243–253 (CLYRSLKLEHY) are Cytoplasmic-facing.

The protein belongs to the tetraspanin (TM4SF) family. In terms of assembly, interacts with integrins ITGA3:ITGB1, ITGA5:ITGB1, ITGA3:ITGB1 and ITGA6:ITGB4 and with CD9 and CD181. Interacts (via the second extracellular domain) with integrin ITGAV:ITGB3. Interacts with ITGA3; this interaction modulates ITGA3 glycosylation pattern. Interacts with F11R. Interacts with RAC1 and CDC42; these interactions mediate physical association of RAC1 and CDC42 with integrin adhesion receptor complexes. Palmitoylated. Palmitoylation by ZDHHC2 regulates CD151 expression, association with other tetraspanin family proteins and function in cell adhesion. Post-translationally, ubiquitinated by RNF128 on lysine residues present in the tetraspanin amino terminus via 'Lys-48'-linked ubiquitin leading to proteasomal degradation.

Its subcellular location is the cell membrane. In terms of biological role, structural component of specialized membrane microdomains known as tetraspanin-enriched microdomains (TERMs), which act as platforms for receptor clustering and signaling. Plays a role in various cellular and molecular mechanism through its association with both integrin and non-integrin proteins. These interactions facilitate critical cellular functions, including cell-to-cell communication, wound healing, platelet aggregation, trafficking, cell motility, and angiogenesis. Via interaction with JAM-A/F11R and integrin ITGA3:ITGB1, promotes the recruitment of signaling molecules such as RAC1, CDC42 and RhoGTPases to facilitate the polarization of epithelial cells and the reorganization of the actin cytoskeleton, which are critical steps in cell migration process. Regulates the glycosylation pattern of ITGA3:ITGB1 thereby modulating its activity. Plays an essential role in the maintenance of central laminin-binding integrin ITGA6:ITGB4-containing adhesion complexes. Essential for the proper assembly of the glomerular and tubular basement membranes in kidney. Contributes to T-cell activation by modulating integrin signaling leading to activation of downstream targets PTK2 and MAPK1/MAPK3. The protein is CD151 antigen (Cd151) of Mus musculus (Mouse).